Here is a 349-residue protein sequence, read N- to C-terminus: Insulin gene enhancer protein ISL-1 (349 aa).

LIM zinc-binding domains follow at residues 17–70 (CVGC…CKRD) and 79–133 (CAKC…RADH). Positions 181-240 (TTRVRTVLNEKQLHTLRTCYAANPRPDALMKEQLVEMTGLSPRVIRVWFQNKRCKDKKRS) form a DNA-binding region, homeobox. The LIM-binding domain (LID) stretch occupies residues 262–291 (GTPMVAASPERHDGGLQANPVEVQSYQPPW). The tract at residues 312–349 (VNFSEGGPGSNSTGSEVASMSSQLPDTPNSMVASPIEA) is disordered. Residues 321–343 (SNSTGSEVASMSSQLPDTPNSMV) are compositionally biased toward polar residues.

At neuronal promoters, displaces LDB1 from LHX3 LIM domain to form a ternary complex in which ISL1 contacts both LHX3 and LDB1; allosteric structural changes in the DNA binding domain of LHX3, induced by the ISL1:LHX3 interaction, may explain differences in sequence specificity of the different complexes. Interacts with LHX3. Interacts (via C-terminus) with POU4F2 (via C-terminus) isoform 1. Interacts with POU3F2. Interacts with POU4F3. Interacts (via N-terminal domain) with MLIP; the interaction represses ISL1 transactivator activity. Interacts with GCN5/KAT2A. Interactions of ISL1 with MLIP1 or KAT2A may be mutually exclusive. In terms of processing, ubiquitinated probably by WWP1 E3 ubiquitin ligase; ubiquitination is followed by protein degradation. Post-translationally, phosphorylated. As to expression, expressed in subsets of neurons of the adrenal medulla and dorsal root ganglion, inner nuclear and ganglion cell layers in the retina, the pineal and some regions of the brain.

The protein localises to the nucleus. Functionally, DNA-binding transcriptional activator. Recognizes and binds to the consensus octamer binding site 5'-ATAATTAA-3' in promoter of target genes. Plays a fundamental role in the gene regulatory network essential for retinal ganglion cell (RGC) differentiation. Cooperates with the transcription factor POU4F2 to achieve maximal levels of expression of RGC target genes and RGC fate specification in the developing retina. Involved in the specification of motor neurons in cooperation with LHX3 and LDB1. Binds to insulin gene enhancer sequences. Essential for heart development. Marker of one progenitor cell population that give rise to the outflow tract, right ventricle, a subset of left ventricular cells, and a large number of atrial cells as well, its function is required for these progenitors to contribute to the heart. Controls the expression of FGF and BMP growth factors in this cell population and is required for proliferation and survival of cells within pharyngeal foregut endoderm and adjacent splanchnic mesoderm as well as for migration of cardiac progenitors into the heart. The polypeptide is Insulin gene enhancer protein ISL-1 (ISL1) (Homo sapiens (Human)).